Here is an 80-residue protein sequence, read N- to C-terminus: Protein UL148A (80 aa).

Residues 10–30 (WIPVCVVVVMTSVVLFAGLHV) traverse the membrane as a helical segment.

The protein localises to the host membrane. Functionally, plays a role in the down-regulation of the host NKG2D ligand MICA by utilizing the lysosomal pathway for its degradation. In turn, MICA reduction diminishes NK-cell killing of HCMV-infected cells. In Human cytomegalovirus (strain Merlin) (HHV-5), this protein is Protein UL148A (UL148A).